The chain runs to 118 residues: Holo-[acyl-carrier-protein] synthase (118 aa).

2 residues coordinate Mg(2+): Asp-6 and Glu-55.

Belongs to the P-Pant transferase superfamily. AcpS family. Requires Mg(2+) as cofactor.

The protein resides in the cytoplasm. It carries out the reaction apo-[ACP] + CoA = holo-[ACP] + adenosine 3',5'-bisphosphate + H(+). Functionally, transfers the 4'-phosphopantetheine moiety from coenzyme A to a Ser of acyl-carrier-protein. This Chlorobium chlorochromatii (strain CaD3) protein is Holo-[acyl-carrier-protein] synthase.